Here is a 230-residue protein sequence, read N- to C-terminus: uncharacterized protein (230 aa).

An N-terminal signal peptide occupies residues 1–21 (MARYDARLRGIGKAHACSAFA). Positions 47-190 (SASVQENFIA…TVQTSSSGDP (144 aa)) are disordered. A compositionally biased stretch (polar residues) spans 141–150 (PQSQTSANSQ). The span at 151-165 (KKPEIRCRERSKNAR) shows a compositional bias: basic and acidic residues. Polar residues predominate over residues 173 to 188 (AVATNEAETVQTSSSG).

It to R.meliloti RA0936 and y4aO.

This is an uncharacterized protein from Sinorhizobium fredii (strain NBRC 101917 / NGR234).